The chain runs to 322 residues: Phospho-N-acetylmuramoyl-pentapeptide-transferase (322 aa).

Transmembrane regions (helical) follow at residues 10–30 (YTALIAFLIVIIIGPIFIPML), 51–71 (NGTPTMGGIIMIVAILITGLT), 79–99 (MAVGLICIAGFGFIGFLDDFI), 107–127 (LGLKAYQKIILQVALSFYVAF), 146–166 (FVINVGILYIPIMMFIIVAIV), 178–198 (LASGVTLIVSVFFMLFASSIA), 203–223 (VAVLAAATVGACLGFLGFNSY), 227–247 (VFMGDTGSMALGGAVVAFSVL), 250–270 (SVLIIPIIGGIYFAEALSVLI), and 302–322 (VVFIFWIITVVLAWISIIAVF).

The protein belongs to the glycosyltransferase 4 family. MraY subfamily. Mg(2+) is required as a cofactor.

The protein resides in the cell membrane. The enzyme catalyses UDP-N-acetyl-alpha-D-muramoyl-L-alanyl-gamma-D-glutamyl-meso-2,6-diaminopimeloyl-D-alanyl-D-alanine + di-trans,octa-cis-undecaprenyl phosphate = di-trans,octa-cis-undecaprenyl diphospho-N-acetyl-alpha-D-muramoyl-L-alanyl-D-glutamyl-meso-2,6-diaminopimeloyl-D-alanyl-D-alanine + UMP. Its pathway is cell wall biogenesis; peptidoglycan biosynthesis. Catalyzes the initial step of the lipid cycle reactions in the biosynthesis of the cell wall peptidoglycan: transfers peptidoglycan precursor phospho-MurNAc-pentapeptide from UDP-MurNAc-pentapeptide onto the lipid carrier undecaprenyl phosphate, yielding undecaprenyl-pyrophosphoryl-MurNAc-pentapeptide, known as lipid I. The protein is Phospho-N-acetylmuramoyl-pentapeptide-transferase of Clostridioides difficile (strain 630) (Peptoclostridium difficile).